A 197-amino-acid polypeptide reads, in one-letter code: Thymidylate kinase (197 aa).

G7 to S14 is a binding site for ATP.

Belongs to the thymidylate kinase family.

The enzyme catalyses dTMP + ATP = dTDP + ADP. Phosphorylation of dTMP to form dTDP in both de novo and salvage pathways of dTTP synthesis. In Fervidobacterium nodosum (strain ATCC 35602 / DSM 5306 / Rt17-B1), this protein is Thymidylate kinase.